The primary structure comprises 369 residues: Anhydro-N-acetylmuramic acid kinase (369 aa).

Residue 9 to 16 (GTSLDAVD) participates in ATP binding.

The protein belongs to the anhydro-N-acetylmuramic acid kinase family.

It catalyses the reaction 1,6-anhydro-N-acetyl-beta-muramate + ATP + H2O = N-acetyl-D-muramate 6-phosphate + ADP + H(+). Its pathway is amino-sugar metabolism; 1,6-anhydro-N-acetylmuramate degradation. It participates in cell wall biogenesis; peptidoglycan recycling. Functionally, catalyzes the specific phosphorylation of 1,6-anhydro-N-acetylmuramic acid (anhMurNAc) with the simultaneous cleavage of the 1,6-anhydro ring, generating MurNAc-6-P. Is required for the utilization of anhMurNAc either imported from the medium or derived from its own cell wall murein, and thus plays a role in cell wall recycling. The polypeptide is Anhydro-N-acetylmuramic acid kinase (Phenylobacterium zucineum (strain HLK1)).